The sequence spans 289 residues: MGKYIRKSKIDGAGAGAGGGGGGGGGGESSIALMDVVSPSSSSSLGVLTRAKSLALQQQQQRCLLQKPSSPSSLPPTSASPNPPSKQKMKKKQQQMNDCGSYLQLRSRRLQKKPPIVVIRSTKRRKQQRRNETCGRNPNPRSNLDSIRGDGSRSDSVSESVVFGKDKDLISEINKDPTFGQNFFDLEEEHTQSFNRTTRESTPCSLIRRPEIMTTPGSSTKLNICVSESNQREDSLSRSHRRRPTTPEMDEFFSGAEEEQQKQFIEKYNFDPVNEQPLPGRFEWTKVDD.

Disordered regions lie at residues 1–31 (MGKYIRKSKIDGAGAGAGGGGGGGGGGESSI), 56–160 (LQQQ…VSES), and 227–248 (SESNQREDSLSRSHRRRPTTPE). Over residues 13-28 (AGAGAGGGGGGGGGGE) the composition is skewed to gly residues. A compositionally biased stretch (low complexity) spans 56–80 (LQQQQQRCLLQKPSSPSSLPPTSAS). Positions 134–144 (CGRNPNPRSNL) are enriched in polar residues.

Belongs to the CDI family. ICK/KRP subfamily. As to quaternary structure, specifically interacts with CDKA-1, but not with CDKB1-1. Interacts with CYCD4-1. Binds to FBL17. Expressed in leaves and flowers and at lower levels in roots.

The protein resides in the nucleus. The protein localises to the nucleoplasm. Binds and inhibits CYCD2-1/CDKA-1 complex kinase activity. May target specifically CDKA-1. This is Cyclin-dependent kinase inhibitor 4 (KRP4) from Arabidopsis thaliana (Mouse-ear cress).